The chain runs to 103 residues: Large ribosomal subunit protein bL21 (103 aa).

Belongs to the bacterial ribosomal protein bL21 family. As to quaternary structure, part of the 50S ribosomal subunit. Contacts protein L20.

In terms of biological role, this protein binds to 23S rRNA in the presence of protein L20. The polypeptide is Large ribosomal subunit protein bL21 (Desulfitobacterium hafniense (strain DSM 10664 / DCB-2)).